The primary structure comprises 962 residues: CRACD-like protein (962 aa).

Disordered stretches follow at residues 38 to 102 (GKKK…PESG), 131 to 174 (NVKM…HDVG), and 212 to 871 (PAES…QEPV). Polar residues predominate over residues 46–61 (PSSTGSSTWKQSQTRN). Position 92 is a phosphoserine (S92). Residues 224–244 (AKHKLQVKPRNQRSSKMRRLS) show a composition bias toward basic residues. Over residues 245 to 256 (SRAQSESLSDLT) the composition is skewed to polar residues. Over residues 266-278 (EKPLLEVSPEERP) the composition is skewed to basic and acidic residues. Pro residues-rich tracts occupy residues 292 to 303 (EPGPPAPLPPPG) and 354 to 365 (PPSPPEGPPNPG). Over residues 407-425 (PEGDTTPPETDPAATSEAP) the composition is skewed to low complexity. Basic and acidic residues-rich tracts occupy residues 429 to 440 (DGPERSVPKEAE) and 459 to 480 (EPER…ERIG). A Phosphoserine modification is found at S490. Residues 503–521 (AAASEGPAASPPLAAAESP) show a composition bias toward low complexity. 4 stretches are compositionally biased toward basic and acidic residues: residues 536 to 546 (APERPKAERAE), 555 to 570 (AAPE…ELRG), 631 to 642 (KLAERGPQDSGD), and 709 to 728 (YSAE…EEKC). Pro residues predominate over residues 753–764 (PEPLSSKPPLPR). Composition is skewed to basic and acidic residues over residues 784–806 (PGER…RGAE) and 844–869 (QEDK…RGQE).

This Homo sapiens (Human) protein is CRACD-like protein.